Reading from the N-terminus, the 42-residue chain is Photosystem I reaction center subunit IX (42 aa).

Residues 7–27 traverse the membrane as a helical segment; it reads YLSVAPVLSTLWFGALAGLLI.

The protein belongs to the PsaJ family.

Its subcellular location is the plastid. It is found in the chloroplast thylakoid membrane. May help in the organization of the PsaE and PsaF subunits. This chain is Photosystem I reaction center subunit IX, found in Agrostis stolonifera (Creeping bentgrass).